Reading from the N-terminus, the 244-residue chain is Type I iodothyronine deiodinase (244 aa).

The Extracellular portion of the chain corresponds to 1-12; that stretch reads MGLSQLGLWLRR. The chain crosses the membrane as a helical; Signal-anchor for type III membrane protein span at residues 13–33; that stretch reads LWVLFQVALQVAVGKVFLILF. Residues 34-244 are Cytoplasmic-facing; it reads PSRVKQHIVA…VRAVLEKLHS (211 aa). Sec121 is a catalytic residue. Residue Sec121 is a non-standard amino acid, selenocysteine.

Belongs to the iodothyronine deiodinase family. In terms of assembly, predominantly monomer. Can form homodimers but homodimerization is not essential for enzyme activity.

It is found in the cell membrane. The protein localises to the endoplasmic reticulum membrane. Its subcellular location is the basolateral cell membrane. The enzyme catalyses 3,3',5-triiodo-L-thyronine + iodide + A + H(+) = L-thyroxine + AH2. It carries out the reaction 3,3',5'-triiodo-L-thyronine + iodide + A + H(+) = L-thyroxine + AH2. It catalyses the reaction 3,3'-diiodo-L-thyronine + iodide + A + H(+) = 3,3',5'-triiodo-L-thyronine + AH2. The catalysed reaction is 3,3'-diiodo-L-thyronine + iodide + A + H(+) = 3,3',5-triiodo-L-thyronine + AH2. The enzyme catalyses 3'-iodo-L-thyronine + iodide + A + H(+) = 3',5'-diiodo-L-thyronine + AH2. It carries out the reaction 3-iodo-L-thyronine + iodide + A + H(+) = 3,5-diiodo-L-thyronine + AH2. It catalyses the reaction 3-iodo-L-thyronine + iodide + A + H(+) = 3,3'-diiodo-L-thyronine + AH2. The catalysed reaction is 3,3'-diiodothyronamine + iodide + A + H(+) = 3,3',5'-triiodothyronamine + AH2. The enzyme catalyses 3'-iodothyronamine + iodide + A + H(+) = 3',5'-diiodothyronamine + AH2. It carries out the reaction 3-iodothyronamine + iodide + A + H(+) = 3,3'-diiodothyronamine + AH2. It catalyses the reaction 3,3'-diiodothyronamine + iodide + A + H(+) = 3,3',5-triiodothyronamine + AH2. The catalysed reaction is 3-iodothyronamine + iodide + A + H(+) = 3,5-diiodothyronamine + AH2. The enzyme catalyses 3,3'-diiodo-L-thyronine sulfate + iodide + A + H(+) = 3,3',5'-triiodo-L-thyronine sulfate + AH2. It carries out the reaction 3,3',5'-triiodo-L-thyronine sulfate + iodide + A + H(+) = L-thyroxine sulfate + AH2. It catalyses the reaction 3,3'-diiodo-L-thyronine sulfate + iodide + A + H(+) = 3,3',5-triiodo-L-thyronine sulfate + AH2. Functionally, plays a crucial role in the metabolism of thyroid hormones (TH) and has specific roles in TH activation and inactivation by deiodination. Catalyzes the deiodination of L-thyroxine (T4) to 3,5,3'-triiodothyronine (T3) and 3',5'-diiodothyronine (3',5'-T2) to 3'-monoiodothyronine (3'-T1) via outer-ring deiodination (ORD). Catalyzes the deiodination of T4 to 3,3',5'-triiodothyronine (rT3), T3 to 3,3'-diiodothyronine (3,3'-T2), 3,5-diiodothyronine (3,5-T2) to 3-monoiodothyronine (3-T1) and 3,3'-T2 to 3-T1 via inner-ring deiodination (IRD). Catalyzes the deiodination of rT3 to 3,3'-T2 via ORD. Catalyzes the phenolic ring deiodinations of 3,3',5'-triiodothyronamine, 3',5'-diiodothyronamine and 3,3'-diiodothyronamine as well as tyrosyl ring deiodinations of 3,5,3'-triiodothyronamine and 3,5-diiodothyronamine. Catalyzes the deiodination of L-thyroxine sulfate and 3,3',5-triiodo-L-thyronine sulfate via IRD and of 3,3',5'-triiodo-L-thyronine sulfate via ORD. The protein is Type I iodothyronine deiodinase (DIO1) of Felis catus (Cat).